Reading from the N-terminus, the 254-residue chain is Glucosamine-6-phosphate deaminase (254 aa).

Aspartate 63 serves as the catalytic Proton acceptor; for enolization step. Catalysis depends on asparagine 129, which acts as the For ring-opening step. The active-site Proton acceptor; for ring-opening step is histidine 131. The active-site For ring-opening step is glutamate 136.

Belongs to the glucosamine/galactosamine-6-phosphate isomerase family. NagB subfamily.

The enzyme catalyses alpha-D-glucosamine 6-phosphate + H2O = beta-D-fructose 6-phosphate + NH4(+). Its pathway is amino-sugar metabolism; N-acetylneuraminate degradation; D-fructose 6-phosphate from N-acetylneuraminate: step 5/5. Its function is as follows. Catalyzes the reversible isomerization-deamination of glucosamine 6-phosphate (GlcN6P) to form fructose 6-phosphate (Fru6P) and ammonium ion. The protein is Glucosamine-6-phosphate deaminase of Exiguobacterium sp. (strain ATCC BAA-1283 / AT1b).